Here is a 467-residue protein sequence, read N- to C-terminus: Glutamate--tRNA ligase (467 aa).

Positions 9–19 (PSPTGYLHIGG) match the 'HIGH' region motif. Positions 237–241 (KLSKR) match the 'KMSKS' region motif. Residue Lys-240 coordinates ATP.

It belongs to the class-I aminoacyl-tRNA synthetase family. Glutamate--tRNA ligase type 1 subfamily. As to quaternary structure, monomer.

The protein localises to the cytoplasm. It catalyses the reaction tRNA(Glu) + L-glutamate + ATP = L-glutamyl-tRNA(Glu) + AMP + diphosphate. In terms of biological role, catalyzes the attachment of glutamate to tRNA(Glu) in a two-step reaction: glutamate is first activated by ATP to form Glu-AMP and then transferred to the acceptor end of tRNA(Glu). This chain is Glutamate--tRNA ligase, found in Xanthomonas oryzae pv. oryzae (strain MAFF 311018).